The chain runs to 66 residues: Large ribosomal subunit protein bL35 (66 aa).

The interval 25–45 (QAAGKRHGMSKRPQKMKRNAR) is disordered. Positions 28–44 (GKRHGMSKRPQKMKRNA) are enriched in basic residues.

This sequence belongs to the bacterial ribosomal protein bL35 family.

This is Large ribosomal subunit protein bL35 from Rhodospirillum centenum (strain ATCC 51521 / SW).